We begin with the raw amino-acid sequence, 332 residues long: Heptahelical transmembrane protein 1 (332 aa).

Positions 1-52 are disordered; the sequence is MDQNGHNDEAETVSCGNGNCKSKIVPGDDHGGDESSGTKRRKKRKTQQKTMK. At 1-98 the chain is on the cytoplasmic side; it reads MDQNGHNDEA…VFSFHNESLN (98 aa). The segment covering 26 to 37 has biased composition (basic and acidic residues); it reads PGDDHGGDESSG. Residues 38–52 are compositionally biased toward basic residues; sequence TKRRKKRKTQQKTMK. Residues 99–119 traverse the membrane as a helical segment; the sequence is VWTHLIGFIFFVALTVANIIH. At 120 to 138 the chain is on the extracellular side; sequence HDGFFPVDAKSPGNVTRWP. Residues 139-159 form a helical membrane-spanning segment; it reads FFVFLGGSMFCLLASSICHLF. Over 160-172 the chain is Cytoplasmic; that stretch reads CCHSKELNVFLLR. A helical membrane pass occupies residues 173–193; it reads IDYAGITAMIITSFFPPIFYI. At 194 to 199 the chain is on the extracellular side; sequence FQCTPR. A helical transmembrane segment spans residues 200 to 220; sequence WYFIYLAGITSMGIFTIITLF. At 221-233 the chain is on the cytoplasmic side; it reads TPSLSAPKYRAFR. The chain crosses the membrane as a helical span at residues 234–254; that stretch reads ALLFASMGLFGIVPAAHALVV. The Extracellular segment spans residues 255 to 262; that stretch reads NWGNPQRN. A helical membrane pass occupies residues 263–283; it reads VTLVYELLMAVFYLVGTGFYV. Residues 284–303 lie on the Cytoplasmic side of the membrane; it reads GRVPERLKPGWFDRVGHSHQ. A helical membrane pass occupies residues 304 to 324; sequence IFHVFVLLGALSHYAAALLFL. Over 325-332 the chain is Extracellular; the sequence is DWRDHVGC.

This sequence belongs to the ADIPOR family. In terms of assembly, interacts (via N-terminus) with SCRM/ICE1. Expressed in roots, hypocotyls, vasculature of cotyledons and leaves, hydathodes and guard cells. In reproductive organs, expressed in trichomes, veins of sepals, stamens and stigmata of pistils.

It is found in the membrane. Its function is as follows. May act as a negative regulator of abscisic acid (ABA)-mediated osmotic stress signaling and function in cross-talk between cold and osmotic signaling. The protein is Heptahelical transmembrane protein 1 (HHP1) of Arabidopsis thaliana (Mouse-ear cress).